We begin with the raw amino-acid sequence, 399 residues long: MQSLAGKKILLGISGGIAAYKCAELTRRLVERGATVQVVMTHAAKEFITPLTMQAVSGRPVSDSLLDPAAEASMGHIELAKWADLVLLAPATADLIARMAAGMGNDLLTTLILATSAPVAIAPAMNQQMYRNIATQENLQTLIRRGYLTWGPAAGEQACGDVGPGRMLEPMELVAHCENFFAPKILVGKRVLITAGPTREALDPVRYITNHSSGKMGFALAKAAAQLGADVTLVSGPVHLPTPVGVNRIDVQSGLEMHSAVMKEATSHQIFIACAAVADYRPQTVAEQKIKKSRDNDTLTIEMVKNPDIVASVAALTENRPFTVGFAAETQDVETYARSKLVRKNLDMICANDVSIAGQGFNSNDNALTLFWKEGQHSLPLTSKDALASAVMHLIHEQM.

Residues Met1 to Arg190 form a phosphopantothenoylcysteine decarboxylase region. Cys159 (proton donor) is an active-site residue. The segment at Val191–Met399 is phosphopantothenate--cysteine ligase. CTP-binding positions include Asp279, Lys289, Pro307 to Val310, Phe326, Lys340, and Lys344.

It in the N-terminal section; belongs to the HFCD (homo-oligomeric flavin containing Cys decarboxylase) superfamily. This sequence in the C-terminal section; belongs to the PPC synthetase family. It depends on Mg(2+) as a cofactor. FMN serves as cofactor.

The enzyme catalyses N-[(R)-4-phosphopantothenoyl]-L-cysteine + H(+) = (R)-4'-phosphopantetheine + CO2. It catalyses the reaction (R)-4'-phosphopantothenate + L-cysteine + CTP = N-[(R)-4-phosphopantothenoyl]-L-cysteine + CMP + diphosphate + H(+). It functions in the pathway cofactor biosynthesis; coenzyme A biosynthesis; CoA from (R)-pantothenate: step 2/5. The protein operates within cofactor biosynthesis; coenzyme A biosynthesis; CoA from (R)-pantothenate: step 3/5. Its function is as follows. Catalyzes two sequential steps in the biosynthesis of coenzyme A. In the first step cysteine is conjugated to 4'-phosphopantothenate to form 4-phosphopantothenoylcysteine. In the second step the latter compound is decarboxylated to form 4'-phosphopantotheine. The chain is Coenzyme A biosynthesis bifunctional protein CoaBC from Vibrio cholerae serotype O1 (strain ATCC 39315 / El Tor Inaba N16961).